Reading from the N-terminus, the 231-residue chain is Phosphatidylserine decarboxylase proenzyme (231 aa).

Serine 188 serves as the catalytic Schiff-base intermediate with substrate; via pyruvic acid. A Pyruvic acid (Ser); by autocatalysis modification is found at serine 188.

Belongs to the phosphatidylserine decarboxylase family. PSD-A subfamily. In terms of assembly, heterodimer of a large membrane-associated beta subunit and a small pyruvoyl-containing alpha subunit. Pyruvate is required as a cofactor. Is synthesized initially as an inactive proenzyme. Formation of the active enzyme involves a self-maturation process in which the active site pyruvoyl group is generated from an internal serine residue via an autocatalytic post-translational modification. Two non-identical subunits are generated from the proenzyme in this reaction, and the pyruvate is formed at the N-terminus of the alpha chain, which is derived from the carboxyl end of the proenzyme. The post-translation cleavage follows an unusual pathway, termed non-hydrolytic serinolysis, in which the side chain hydroxyl group of the serine supplies its oxygen atom to form the C-terminus of the beta chain, while the remainder of the serine residue undergoes an oxidative deamination to produce ammonia and the pyruvoyl prosthetic group on the alpha chain.

It is found in the cell membrane. The catalysed reaction is a 1,2-diacyl-sn-glycero-3-phospho-L-serine + H(+) = a 1,2-diacyl-sn-glycero-3-phosphoethanolamine + CO2. The protein operates within phospholipid metabolism; phosphatidylethanolamine biosynthesis; phosphatidylethanolamine from CDP-diacylglycerol: step 2/2. Its function is as follows. Catalyzes the formation of phosphatidylethanolamine (PtdEtn) from phosphatidylserine (PtdSer). This Rickettsia felis (strain ATCC VR-1525 / URRWXCal2) (Rickettsia azadi) protein is Phosphatidylserine decarboxylase proenzyme.